Here is a 120-residue protein sequence, read N- to C-terminus: Myohemerythrin (120 aa).

Fe cation-binding residues include His26, His56, Glu60, His75, His79, His108, and Asp113.

Belongs to the hemerythrin family.

Its function is as follows. Myohemerythrin is an oxygen-binding protein found in the retractor muscles of certain worms. The oxygen-binding site contains two iron atoms. This chain is Myohemerythrin, found in Sipunculus nudus (Sipunculan worm).